An 87-amino-acid chain; its full sequence is Small ribosomal subunit protein uS17 (87 aa).

Belongs to the universal ribosomal protein uS17 family. Part of the 30S ribosomal subunit.

Functionally, one of the primary rRNA binding proteins, it binds specifically to the 5'-end of 16S ribosomal RNA. This is Small ribosomal subunit protein uS17 from Bacillus licheniformis (strain ATCC 14580 / DSM 13 / JCM 2505 / CCUG 7422 / NBRC 12200 / NCIMB 9375 / NCTC 10341 / NRRL NRS-1264 / Gibson 46).